A 500-amino-acid chain; its full sequence is MSFVLAIDQGTTSSRAIVFRDDISIAAVAQQEFSQHFPASGWVEHEPEDIWSSTLATSRAAIEQAGLKASDIAAIGITNQRETVVLWDRVTGQAIHRAIVWQDRRTSEICARLKSEGHEPLITQKTGLIIDPYFSGTKIGWLLDQVPGARARAERGELLFGTVDCYLLWRLTGGKIHATDATNASRTLLFNIHTGQWDAELLALLNVPRSLLPEVKDSSADFGTSDQNLFGGSIAIRGIAGDQQAATIGQACFAPGMMKSTYGTGCFALLNTGSTPVKSNNKLLTTIAYQLNGQRTYALEGSIFVAGSAVQWLRDGLGIISHASETGPLADKSDSTQSVYLVPAFVGLGAPYWNPRLRGALFGLTRNTGPAELAHAALESVCYQTFDLWAAMRADWPDADEASIVLRVDGGMTASDWTMQRLADLLDAPVDRPMIQETTALGAAYLAGLSAGIFPEPQQFADNWRLQHRFKPSMSAATRARKLKGWAAAVRGLLATDEGE.

ADP is bound at residue T11. Positions 11, 12, and 13 each coordinate ATP. T11 contacts sn-glycerol 3-phosphate. R15 contributes to the ADP binding site. Sn-glycerol 3-phosphate-binding residues include R81, E82, Y133, and D242. R81, E82, Y133, D242, and Q243 together coordinate glycerol. 2 residues coordinate ADP: T264 and G307. T264, G307, Q311, and G411 together coordinate ATP. ADP is bound at residue G411.

It belongs to the FGGY kinase family.

It catalyses the reaction glycerol + ATP = sn-glycerol 3-phosphate + ADP + H(+). It functions in the pathway polyol metabolism; glycerol degradation via glycerol kinase pathway; sn-glycerol 3-phosphate from glycerol: step 1/1. With respect to regulation, inhibited by fructose 1,6-bisphosphate (FBP). Functionally, key enzyme in the regulation of glycerol uptake and metabolism. Catalyzes the phosphorylation of glycerol to yield sn-glycerol 3-phosphate. This chain is Glycerol kinase, found in Rhodopseudomonas palustris (strain BisA53).